The chain runs to 87 residues: Small ribosomal subunit protein bS20 (87 aa).

The segment at 1–26 is disordered; the sequence is MANIKSAKKRAVQSEKARKHNASRRS.

This sequence belongs to the bacterial ribosomal protein bS20 family.

Binds directly to 16S ribosomal RNA. The protein is Small ribosomal subunit protein bS20 of Klebsiella pneumoniae (strain 342).